The primary structure comprises 364 residues: Spermidine/putrescine import ATP-binding protein PotA (364 aa).

The ABC transporter domain maps to 5 to 235 (LSFKDVSKGF…PVNRFVADFI (231 aa)). Position 37-44 (37-44 (GPSGCGKT)) interacts with ATP.

Belongs to the ABC transporter superfamily. Spermidine/putrescine importer (TC 3.A.1.11.1) family. As to quaternary structure, the complex is composed of two ATP-binding proteins (PotA), two transmembrane proteins (PotB and PotC) and a solute-binding protein (PotD).

The protein resides in the cell membrane. It carries out the reaction ATP + H2O + polyamine-[polyamine-binding protein]Side 1 = ADP + phosphate + polyamineSide 2 + [polyamine-binding protein]Side 1.. Functionally, part of the ABC transporter complex PotABCD involved in spermidine/putrescine import. Responsible for energy coupling to the transport system. This Staphylococcus epidermidis (strain ATCC 12228 / FDA PCI 1200) protein is Spermidine/putrescine import ATP-binding protein PotA.